The chain runs to 516 residues: GMP synthase [glutamine-hydrolyzing] (516 aa).

The region spanning 6–198 is the Glutamine amidotransferase type-1 domain; sequence KVIIVDYGSQ…LFKIAGIKAD (193 aa). Cysteine 83 serves as the catalytic Nucleophile. Residues histidine 172 and glutamate 174 contribute to the active site. The GMPS ATP-PPase domain maps to 199–391; sequence WSMSSFCERV…LGLPDFIVWR (193 aa). Position 227–233 (227–233) interacts with ATP; sequence SGGIDST.

Homodimer.

The enzyme catalyses XMP + L-glutamine + ATP + H2O = GMP + L-glutamate + AMP + diphosphate + 2 H(+). Its pathway is purine metabolism; GMP biosynthesis; GMP from XMP (L-Gln route): step 1/1. Catalyzes the synthesis of GMP from XMP. The sequence is that of GMP synthase [glutamine-hydrolyzing] from Oleidesulfovibrio alaskensis (strain ATCC BAA-1058 / DSM 17464 / G20) (Desulfovibrio alaskensis).